The following is a 130-amino-acid chain: Protein UL145 (130 aa).

In terms of assembly, interacts with host DDB1; this interaction promotes STAT2 degradation.

In terms of biological role, plays a role in the inhibition of host innate immunity by exploiting host DDB1-cullin RING ubiquitin ligases (CRLs). Mechanistically, recruits host DDB1 via a DCAF-like interaction motif to antagonize IFN signaling by STAT2 degradation. This is Protein UL145 (UL145) from Homo sapiens (Human).